The sequence spans 196 residues: Putative 3-methyladenine DNA glycosylase (196 aa).

Belongs to the DNA glycosylase MPG family.

The chain is Putative 3-methyladenine DNA glycosylase from Bacillus licheniformis (strain ATCC 14580 / DSM 13 / JCM 2505 / CCUG 7422 / NBRC 12200 / NCIMB 9375 / NCTC 10341 / NRRL NRS-1264 / Gibson 46).